We begin with the raw amino-acid sequence, 336 residues long: MTRAAVLGAGSWGTAFAKVLADAGTEVTIWARRPEIAEALATEHRNPAYLPDVQLPAVSATHDAEAALDGAQLVVLAVPSQSLRANLTGWRPALRAAIDEHDATLLSLAKGIETGTLLRMSQVIAEVTGAEERRIAVLSGPNLAREIAAGQPAATVIACSDAARAEAVQQASYTGYFRPYTNTDVIGCEIGGACKNVIALACGIAAGMGLGDNSIASLITRGLAEIMRLAVTLGAEPVTLAGLAGVGDLVATCTSPLSRNRSFGHVLGAGGSMEAAQQATHGQVAEGVKSCTSVRALAAAHEVEMPLTDAVHRVCHEGISVREAVGSLLGRRIKPE.

NADPH is bound by residues Ser-11, Trp-12, Arg-32, Arg-33, and Lys-110. Positions 110 and 140 each coordinate sn-glycerol 3-phosphate. Ala-144 is a binding site for NADPH. Positions 195, 248, 258, 259, and 260 each coordinate sn-glycerol 3-phosphate. Catalysis depends on Lys-195, which acts as the Proton acceptor. NADPH is bound at residue Arg-259. Residues Val-284 and Glu-286 each contribute to the NADPH site.

The protein belongs to the NAD-dependent glycerol-3-phosphate dehydrogenase family.

It localises to the cytoplasm. It catalyses the reaction sn-glycerol 3-phosphate + NAD(+) = dihydroxyacetone phosphate + NADH + H(+). The catalysed reaction is sn-glycerol 3-phosphate + NADP(+) = dihydroxyacetone phosphate + NADPH + H(+). The protein operates within membrane lipid metabolism; glycerophospholipid metabolism. Functionally, catalyzes the reduction of the glycolytic intermediate dihydroxyacetone phosphate (DHAP) to sn-glycerol 3-phosphate (G3P), the key precursor for phospholipid synthesis. The protein is Glycerol-3-phosphate dehydrogenase [NAD(P)+] of Nocardia farcinica (strain IFM 10152).